The chain runs to 611 residues: ATP-dependent zinc metalloprotease FtsH 1 (611 aa).

Residues 1-6 are Cytoplasmic-facing; that stretch reads MNDNNK. A helical membrane pass occupies residues 7 to 27; that stretch reads IIRSMVLYLLIFIAIYAMVQL. Residues 28–107 are Extracellular-facing; sequence YSQSTEPITD…KSEPQVGPPW (80 aa). A helical membrane pass occupies residues 108-128; the sequence is WVQMLPSLFLIVIFIIFWYIF. Residue 124-131 coordinates ATP; sequence FWYIFMQQ. Over 129–611 the chain is Cytoplasmic; sequence MQQAQGGGGS…GEDIEGVQFA (483 aa). Histidine 423 provides a ligand contact to Zn(2+). The active site involves glutamate 424. 2 residues coordinate Zn(2+): histidine 427 and aspartate 499.

This sequence in the central section; belongs to the AAA ATPase family. In the C-terminal section; belongs to the peptidase M41 family. In terms of assembly, homohexamer. It depends on Zn(2+) as a cofactor.

It is found in the cell membrane. Functionally, acts as a processive, ATP-dependent zinc metallopeptidase for both cytoplasmic and membrane proteins. Plays a role in the quality control of integral membrane proteins. The sequence is that of ATP-dependent zinc metalloprotease FtsH 1 from Thermoanaerobacter sp. (strain X514).